The sequence spans 339 residues: MO25-like protein 3 (339 aa).

Belongs to the Mo25 family.

In Caenorhabditis elegans, this protein is MO25-like protein 3 (mop-25.3).